We begin with the raw amino-acid sequence, 457 residues long: Toxin and drug export protein A (457 aa).

The N-terminal stretch at Met1–Ile23 is a signal peptide.

It belongs to the outer membrane factor (OMF) (TC 1.B.17) family. Homotrimer. Probably part of a complex composed of LtxB, LtxD and TdeA, which forms a single transport channel across the two membranes.

Its subcellular location is the cell outer membrane. Its function is as follows. Required for secretion of the LtxA leukotoxin and resistance to various antimicrobial compounds. This is Toxin and drug export protein A from Aggregatibacter actinomycetemcomitans (Actinobacillus actinomycetemcomitans).